The following is a 581-amino-acid chain: Pyridine nucleotide-disulfide oxidoreductase domain-containing protein 2 (581 aa).

38–71 (VVIGAGHNGLVAAAYLQRLGVNTAVFERRHVIGG) is an FAD binding site.

Belongs to the carotenoid/retinoid oxidoreductase family. Interacts with COX5B; this interaction may contribute to localize PYROXD2 to the inner face of the inner mitochondrial membrane.

The protein resides in the mitochondrion matrix. In terms of biological role, probable oxidoreductase that may play a role as regulator of mitochondrial function. This Homo sapiens (Human) protein is Pyridine nucleotide-disulfide oxidoreductase domain-containing protein 2.